The chain runs to 274 residues: 2,3,4,5-tetrahydropyridine-2,6-dicarboxylate N-succinyltransferase (274 aa).

R104 and D141 together coordinate substrate.

It belongs to the transferase hexapeptide repeat family. In terms of assembly, homotrimer.

The protein localises to the cytoplasm. It carries out the reaction (S)-2,3,4,5-tetrahydrodipicolinate + succinyl-CoA + H2O = (S)-2-succinylamino-6-oxoheptanedioate + CoA. It participates in amino-acid biosynthesis; L-lysine biosynthesis via DAP pathway; LL-2,6-diaminopimelate from (S)-tetrahydrodipicolinate (succinylase route): step 1/3. This is 2,3,4,5-tetrahydropyridine-2,6-dicarboxylate N-succinyltransferase from Shewanella pealeana (strain ATCC 700345 / ANG-SQ1).